The chain runs to 243 residues: MQRALLSSLRRSAGIRSGVNSMRVVRPTVLAPRMSMIRFASTEASKKEGKEDKAEAQGSQEPETAAETNKEAEGAKVEVSEIDELKAKLTKKDRELADMKNHYARAIADFRNLQESTKLEKQKARDFALQKFAKDLLESVDNFDLALNAVKEDTLKNNSEVKNLYDGVDMTRNVFEKTLARHGIEKVDPIGEQFDPNQHEATFEIAQPDKEPGTVFHVQQNGYTLNSRVLRPAKVGVVKDAEN.

A disordered region spans residues 42 to 75 (TEASKKEGKEDKAEAQGSQEPETAAETNKEAEGA). The span at 44–55 (ASKKEGKEDKAE) shows a compositional bias: basic and acidic residues.

The protein belongs to the GrpE family. In terms of assembly, component of the PAM complex, at least composed of mtHsp70, MGE1, TIM44, PAM16, PAM17 and PAM18.

Its subcellular location is the mitochondrion matrix. Its function is as follows. Essential component of the PAM complex, a complex required for the translocation of transit peptide-containing proteins from the inner membrane into the mitochondrial matrix in an ATP-dependent manner. Seems to control the nucleotide-dependent binding of SSC1 to substrate proteins. The protein is GrpE protein homolog, mitochondrial (mge1) of Debaryomyces hansenii (strain ATCC 36239 / CBS 767 / BCRC 21394 / JCM 1990 / NBRC 0083 / IGC 2968) (Yeast).